We begin with the raw amino-acid sequence, 434 residues long: Serine--tRNA ligase (434 aa).

Residue 237–239 (TAE) participates in L-serine binding. 268–270 (RAE) provides a ligand contact to ATP. An L-serine-binding site is contributed by E291. 358–361 (EISS) is a binding site for ATP. S393 contributes to the L-serine binding site.

This sequence belongs to the class-II aminoacyl-tRNA synthetase family. Type-1 seryl-tRNA synthetase subfamily. As to quaternary structure, homodimer. The tRNA molecule binds across the dimer.

It localises to the cytoplasm. It catalyses the reaction tRNA(Ser) + L-serine + ATP = L-seryl-tRNA(Ser) + AMP + diphosphate + H(+). It carries out the reaction tRNA(Sec) + L-serine + ATP = L-seryl-tRNA(Sec) + AMP + diphosphate + H(+). It participates in aminoacyl-tRNA biosynthesis; selenocysteinyl-tRNA(Sec) biosynthesis; L-seryl-tRNA(Sec) from L-serine and tRNA(Sec): step 1/1. Its function is as follows. Catalyzes the attachment of serine to tRNA(Ser). Is also able to aminoacylate tRNA(Sec) with serine, to form the misacylated tRNA L-seryl-tRNA(Sec), which will be further converted into selenocysteinyl-tRNA(Sec). The sequence is that of Serine--tRNA ligase from Rhodopseudomonas palustris (strain BisB5).